We begin with the raw amino-acid sequence, 309 residues long: Glycine-rich RNA-binding protein 3, mitochondrial (309 aa).

Residues 1 to 37 (MAFLSKFGNILKQTTNKQLNAQVSLSSPSLFQAIRCM) constitute a mitochondrion transit peptide. In terms of domain architecture, RRM spans 40 to 118 (SKLFIGGMAY…RVVKVNYAND (79 aa)). The interval 247–309 (FAGDSQFGGS…GEFEDVAKRA (63 aa)) is disordered. Residues 258-273 (VGNSSQFGGDNTQFTA) are compositionally biased toward polar residues.

This sequence belongs to the GR-RBP family. As to quaternary structure, homodimer. Interacts with ORRM2 and MORF8/RIP1. Interacts with RBG5/ORRM4. Binds to RBG2/ORRM5.

It localises to the mitochondrion. Its function is as follows. Possibly has a role in RNA transcription or processing during stress. Involved in C-to-U editing of mitochondrial RNA. Functions as a minor mitochondrial editing factor. Controls 6 percent of the mitochondrial editing sites. This Arabidopsis thaliana (Mouse-ear cress) protein is Glycine-rich RNA-binding protein 3, mitochondrial.